A 242-amino-acid chain; its full sequence is Pyridoxine 5'-phosphate synthase (242 aa).

Asn6 serves as a coordination point for 3-amino-2-oxopropyl phosphate. Position 8–9 (8–9) interacts with 1-deoxy-D-xylulose 5-phosphate; sequence DH. Arg17 serves as a coordination point for 3-amino-2-oxopropyl phosphate. His42 functions as the Proton acceptor in the catalytic mechanism. 1-deoxy-D-xylulose 5-phosphate contacts are provided by Arg44 and His49. Residue Glu69 is the Proton acceptor of the active site. Thr99 is a 1-deoxy-D-xylulose 5-phosphate binding site. Catalysis depends on His190, which acts as the Proton donor. 3-amino-2-oxopropyl phosphate is bound by residues Gly191 and 212–213; that span reads GH.

It belongs to the PNP synthase family. As to quaternary structure, homooctamer; tetramer of dimers.

The protein resides in the cytoplasm. It catalyses the reaction 3-amino-2-oxopropyl phosphate + 1-deoxy-D-xylulose 5-phosphate = pyridoxine 5'-phosphate + phosphate + 2 H2O + H(+). It functions in the pathway cofactor biosynthesis; pyridoxine 5'-phosphate biosynthesis; pyridoxine 5'-phosphate from D-erythrose 4-phosphate: step 5/5. Its function is as follows. Catalyzes the complicated ring closure reaction between the two acyclic compounds 1-deoxy-D-xylulose-5-phosphate (DXP) and 3-amino-2-oxopropyl phosphate (1-amino-acetone-3-phosphate or AAP) to form pyridoxine 5'-phosphate (PNP) and inorganic phosphate. This is Pyridoxine 5'-phosphate synthase from Neisseria meningitidis serogroup B (strain ATCC BAA-335 / MC58).